A 589-amino-acid chain; its full sequence is Protein drl-1 (589 aa).

Positions 1–51 (MHSEEKYLHIPNNTKYPEIIVEEEEEDPSEEERSELSETDDVATPLRPSDT) are disordered. Acidic residues predominate over residues 20–41 (IVEEEEEDPSEEERSELSETDD). The 277-residue stretch at 97–373 (WRINEDVMKD…QNLLESHGSK (277 aa)) folds into the Protein kinase domain. The next 3 membrane-spanning stretches (helical) occupy residues 429–449 (GFIP…VLLV), 456–476 (LCAA…IFLI), and 491–511 (GFVV…TTLC).

The protein belongs to the protein kinase superfamily. STE Ser/Thr protein kinase family. In terms of tissue distribution, expressed in vulval and body wall muscles, hypodermis, seam cells and tissues next to pharynx and anus.

Its subcellular location is the membrane. Its function is as follows. Negatively regulates lifespan and health span probably by participating in nutrient sensing. The polypeptide is Protein drl-1 (Caenorhabditis elegans).